A 443-amino-acid polypeptide reads, in one-letter code: Exodeoxyribonuclease 7 large subunit (443 aa).

Belongs to the XseA family. As to quaternary structure, heterooligomer composed of large and small subunits.

The protein localises to the cytoplasm. The catalysed reaction is Exonucleolytic cleavage in either 5'- to 3'- or 3'- to 5'-direction to yield nucleoside 5'-phosphates.. Functionally, bidirectionally degrades single-stranded DNA into large acid-insoluble oligonucleotides, which are then degraded further into small acid-soluble oligonucleotides. This is Exodeoxyribonuclease 7 large subunit from Legionella pneumophila (strain Corby).